The sequence spans 393 residues: Protein TsgA (393 aa).

The next 12 membrane-spanning stretches (helical) occupy residues 11-31 (WISFLSYALTGALVIVTGMVM), 51-71 (FLNAGILISIFLNAWLMEIVP), 78-98 (FGFILMVLAVAGLMFSHSLAL), 101-121 (AAMFVLGLVSGITMSIGTFLI), 134-154 (LLFTDSFFSMAGMIFPMVAAF), 162-182 (WYWVYACIGLVYLAIFILTFG), 206-226 (IGVLFLAVAALCYILGQLGFI), 245-265 (ALVSDFWMSYMFGMWAFSFIL), 273-293 (ILTVLAGMAAVLMYLFITGTQ), 298-318 (WFILTLGFFSSAIYTSIITLG), 332-352 (FILTCGTIGTMLTFVVTGPIV), and 361-381 (LLTANGLYAVVFVMCFALGFV).

It belongs to the major facilitator superfamily. TsgA family.

The protein localises to the cell inner membrane. This Salmonella gallinarum (strain 287/91 / NCTC 13346) protein is Protein TsgA.